Here is a 114-residue protein sequence, read N- to C-terminus: Cytokine SCM-1 beta (114 aa).

The first 21 residues, 1–21 (MRLLILALLGICSLTAYIVEG), serve as a signal peptide directing secretion. Cys32 and Cys69 are oxidised to a cystine. The interval 91–114 (RNNMIQTKPTGTQQSTNTAVTLTG) is disordered.

It belongs to the intercrine gamma family.

Its subcellular location is the secreted. In terms of biological role, chemotactic activity for lymphocytes but not for monocytes or neutrophils. The protein is Cytokine SCM-1 beta (XCL2) of Homo sapiens (Human).